We begin with the raw amino-acid sequence, 169 residues long: Small ribosomal subunit protein uS5c (169 aa).

Residues 17-80 enclose the S5 DRBM domain; it reads WQERVIQVRR…TDGRKNLINI (64 aa).

Belongs to the universal ribosomal protein uS5 family. As to quaternary structure, part of the 30S ribosomal subunit. Contacts protein S4.

It localises to the plastid. It is found in the chloroplast. With S4 and S12 plays an important role in translational accuracy. This Guillardia theta (Cryptophyte) protein is Small ribosomal subunit protein uS5c (rps5).